Reading from the N-terminus, the 257-residue chain is uncharacterized protein (257 aa).

Disordered stretches follow at residues 1 to 178 and 194 to 248; these read MAMF…SYDS and AITK…LAGN. Residues 12 to 21 are compositionally biased toward basic residues; the sequence is SKLKKGRRKL. Over residues 50–71 the composition is skewed to low complexity; the sequence is NTNSGSSSDGEDGLLTSSGSDS. Residues 72 to 94 are compositionally biased toward polar residues; it reads VFNSTDYFSTPEDSQNCTPSDVS. Residues 102 to 114 are compositionally biased toward basic and acidic residues; the sequence is LDFKPADVLHDSE. Residues 115-126 are compositionally biased toward polar residues; it reads NSTSPKFITSLV. The span at 127–136 shows a compositional bias: low complexity; the sequence is SSDSENSGAD. Residues 163–178 show a composition bias toward acidic residues; sequence ITSEEDCCVQEDSYDS.

This sequence belongs to the herpesviridae BKRF4 family.

This is an uncharacterized protein from Saimiriine herpesvirus 2 (strain 11) (SaHV-2).